A 66-amino-acid chain; its full sequence is Large ribosomal subunit protein uL29 (66 aa).

It belongs to the universal ribosomal protein uL29 family.

In Bartonella henselae (strain ATCC 49882 / DSM 28221 / CCUG 30454 / Houston 1) (Rochalimaea henselae), this protein is Large ribosomal subunit protein uL29.